The sequence spans 509 residues: Probable triacylglyceride transporter ML0556 (509 aa).

13 helical membrane passes run 48-68 (RITW…PLLS), 78-98 (LLLQ…ALAG), 112-132 (IQGV…ADLW), 146-166 (AAQE…VWLF), 171-191 (YVFW…QVSL), 203-223 (VDVV…IGLY), 232-252 (VLPS…VAFA), 272-292 (PFLS…VTLV), 309-329 (AAGL…LGGW), 339-359 (MTFV…HWPV), 381-403 (LLVA…LRVV), 410-430 (IASA…VAAL), and 477-497 (IFMI…LISS).

It belongs to the major facilitator superfamily.

It is found in the cell inner membrane. Functionally, in association with lipoprotein LprG probably transports triacylglycerides (TAG) across the inner cell membrane into the periplasm; TAG probably regulates lipid metabolism and growth regulation. May be an efflux transporter and involved in maintaining correct cell wall permeability. Probably required with LprG for normal surface localization of lipoarabinomannan (LAM). This is Probable triacylglyceride transporter ML0556 from Mycobacterium leprae (strain TN).